The sequence spans 2197 residues: Protein sickie (2197 aa).

One can recognise a Calponin-homology (CH) domain in the interval Arg21 to Gln129. 7 disordered regions span residues Gly165–Gln197, Cys235–His311, Ala331–His646, Gly730–Lys767, Arg788–Val910, Gly1094–Asn1119, and Thr1202–Gly1223. Low complexity predominate over residues Gln175 to Gln197. The segment covering Ser261 to Arg290 has biased composition (polar residues). Positions Pro291–Pro304 are enriched in low complexity. Residues Ala331–Gln341 are compositionally biased toward polar residues. 2 stretches are compositionally biased toward low complexity: residues Ser342 to Ala354 and Ser379 to Gln398. The span at Gln399–Asn428 shows a compositional bias: basic and acidic residues. Polar residues-rich tracts occupy residues Glu429 to Ser441, Ala561 to Ser570, Glu577 to Tyr588, and Ser633 to Lys644. 3 stretches are compositionally biased toward low complexity: residues Gly755–Gly766, Ser796–Asn831, and Ser887–Pro904. Residues Gly1100 to Asn1119 show a composition bias toward polar residues. A coiled-coil region spans residues Tyr1262–Gln1342. Disordered stretches follow at residues Gln1373–Ser1415 and Lys1455–Lys1511. Composition is skewed to polar residues over residues Gly1379–Ser1399 and Arg1406–Ser1415. The segment covering Lys1455 to His1468 has biased composition (basic residues). A coiled-coil region spans residues Ser1556 to Thr1591. Disordered stretches follow at residues Ser1600–Glu1633, Cys1648–Pro1690, and Ser2172–Glu2197. Over residues Gln1603–Glu1616 the composition is skewed to polar residues. The segment covering Pro1650–Pro1663 has biased composition (pro residues). Positions Leu2184–Glu2197 are enriched in polar residues.

The protein belongs to the Nav/unc-53 family.

Required for the immune deficiency pathway, which mediates responses to Gram-negative bacterial infection. Favors Rel activation and nuclear translocation. This chain is Protein sickie (sick), found in Drosophila melanogaster (Fruit fly).